The chain runs to 456 residues: UPF0496 protein 4 (456 aa).

The chain crosses the membrane as a helical span at residues 195-217; that stretch reads VLMRALYGIESVTVFVCSIFVAV. The tract at residues 368 to 390 is disordered; sequence QDSNVKQANGSSDESALVVPERT. Residues 371-381 show a composition bias toward polar residues; that stretch reads NVKQANGSSDE.

This sequence belongs to the ROH1 family.

Its subcellular location is the membrane. The sequence is that of UPF0496 protein 4 from Oryza sativa subsp. japonica (Rice).